The following is a 365-amino-acid chain: Peptide chain release factor 2 (365 aa).

Glutamine 251 is modified (N5-methylglutamine).

This sequence belongs to the prokaryotic/mitochondrial release factor family. Methylated by PrmC. Methylation increases the termination efficiency of RF2.

Its subcellular location is the cytoplasm. Peptide chain release factor 2 directs the termination of translation in response to the peptide chain termination codons UGA and UAA. In Campylobacter jejuni subsp. jejuni serotype O:23/36 (strain 81-176), this protein is Peptide chain release factor 2.